The primary structure comprises 86 residues: DNA-directed RNA polymerase subunit Rpo6 (86 aa).

The protein belongs to the archaeal Rpo6/eukaryotic RPB6 RNA polymerase subunit family. Part of the RNA polymerase complex.

The protein resides in the cytoplasm. The enzyme catalyses RNA(n) + a ribonucleoside 5'-triphosphate = RNA(n+1) + diphosphate. In terms of biological role, DNA-dependent RNA polymerase (RNAP) catalyzes the transcription of DNA into RNA using the four ribonucleoside triphosphates as substrates. The sequence is that of DNA-directed RNA polymerase subunit Rpo6 from Sulfurisphaera tokodaii (strain DSM 16993 / JCM 10545 / NBRC 100140 / 7) (Sulfolobus tokodaii).